Here is a 346-residue protein sequence, read N- to C-terminus: 4-hydroxy-2-oxovalerate aldolase 2 (346 aa).

The 253-residue stretch at 8–260 (VTVHDMTLRD…ETGVDVFKIQ (253 aa)) folds into the Pyruvate carboxyltransferase domain. A substrate-binding site is contributed by 16-17 (RD). Mn(2+) is bound at residue aspartate 17. The Proton acceptor role is filled by histidine 20. Substrate-binding residues include serine 170 and histidine 199. Mn(2+) contacts are provided by histidine 199 and histidine 201. Substrate is bound at residue tyrosine 290.

Belongs to the 4-hydroxy-2-oxovalerate aldolase family.

The catalysed reaction is (S)-4-hydroxy-2-oxopentanoate = acetaldehyde + pyruvate. The polypeptide is 4-hydroxy-2-oxovalerate aldolase 2 (bphX3) (Metapseudomonas furukawaii (Pseudomonas furukawaii)).